Reading from the N-terminus, the 340-residue chain is MGGGVSVELPKRDPPPGVPTDEMLLNVDKMHDVIAPAKLLEYVHIGPLAKDKEDKVKKRYPEFRLVNTGPGGLSALLRQSYNGTAPNCCRTFNRTHYWKKDGKISDKYEEGAVLESCWPDVHDTGKCDVDLFDWCQGDTFDRNICHQWIGSAFNRSNRTVEGQQSLINLYNKMQTLCSKDASVPICESFLHHLRAHNTEDSKEMIDYILRQQSADFKQKYMRCSYPTRDKLEESLKYAEPRECWDPECSNANVNFLLTRNYNNLGLCNIVRCNTSVNNLQMDKTSSLRLSCGLSNSDKFSTVPVNRAKVVQHNIKHSFDLKLHLISLLSLLVIWILIVAI.

The tract at residues methionine 1 to threonine 20 is disordered. The N-myristoyl glycine; by host moiety is linked to residue glycine 2. Residues glycine 2–aspartate 319 are Virion surface-facing. Residues leucine 320–isoleucine 340 traverse the membrane as a helical; Signal-anchor for type II membrane protein segment.

Belongs to the orthopoxvirus OPG086 family. As to quaternary structure, interacts with OPG143. Component of the entry fusion complex (EFC) composed of OPG053, OPG076, OPG086, OPG094, OPG095, OPG099, OPG107, OPG143, OPG104, OPG147 and OPG155. Except for OPG095 and OPG053, each of the EFC proteins is required for assembly or stability of the complex. Unglycosylated because produced in viral factories instead of the classic ER -Golgi route.

It is found in the virion membrane. Functionally, component of the entry fusion complex (EFC), which consists of 11 proteins. During cell infection, this complex mediates entry of the virion core into the host cytoplasm by a two-step mechanism consisting of lipid mixing of the viral and cellular membranes and subsequent pore formation. In Homo sapiens (Human), this protein is Entry-fusion complex protein OPG094 (OPG094).